The chain runs to 419 residues: BTB/POZ domain-containing protein KCTD20 (419 aa).

In terms of domain architecture, BTB spans 117-191 (EKVTLLVDGT…YKTGIINCPD (75 aa)).

In terms of assembly, interacts with AKT1; AKT2 and AKT3. Interacts with PPP2CA and PPP1CA. Part of a complex containing MARK4. In terms of tissue distribution, ubiquitously expressed.

It is found in the cytoplasm. In terms of biological role, promotes the phosphorylation of AKT family members. In Mus musculus (Mouse), this protein is BTB/POZ domain-containing protein KCTD20 (Kctd20).